The following is a 359-amino-acid chain: MTTTIQQRSGANGWQQFCDWVTSTNNRLYVGWFGVLMIPTLLAATTCFIVAFIAAPPVDIDGIREPVAGSLMYGNNIISGAVVPSSNAIGLHFYPIWEAASLDEWLYNGGPFQLVVFHFLIGIYAYMGREWELSYRLGMRPWICVAYSAPVAAASAVFLVYPFGQGSFSDAMPLGISGTFNYMLVFQAEHNILMHPFHMLGVAGVFGGSLFSAMHGSLVTSSLVRETTETESQNYGYKFGQEEETYNIVAAHGYFGRLIFQYASFNNSRSLHFFLAAWPVVGIWFTALGVSTMAFNLNGFNFNQSILDGQGRVLNTWADVLNRAGLGMEVMHERNAHNFPLDLAAAESTPVALQAPAIG.

3 consecutive transmembrane segments (helical) span residues 29-46 (YVGW…AATT), 118-133 (HFLI…EWEL), and 142-156 (WICV…AASA). Histidine 118 lines the chlorophyll a pocket. Tyrosine 126 is a pheophytin a binding site. [CaMn4O5] cluster-binding residues include aspartate 170 and glutamate 189. The helical transmembrane segment at 197–218 (FHMLGVAGVFGGSLFSAMHGSL) threads the bilayer. Histidine 198 is a binding site for chlorophyll a. A quinone is bound by residues histidine 215 and 264–265 (SF). Residue histidine 215 participates in Fe cation binding. Histidine 272 serves as a coordination point for Fe cation. A helical transmembrane segment spans residues 274-288 (FLAAWPVVGIWFTAL). [CaMn4O5] cluster-binding residues include histidine 332, glutamate 333, aspartate 342, and alanine 344. The propeptide occupies 345–359 (AAESTPVALQAPAIG).

The protein belongs to the reaction center PufL/M/PsbA/D family. In terms of assembly, PSII is composed of 1 copy each of membrane proteins PsbA, PsbB, PsbC, PsbD, PsbE, PsbF, PsbH, PsbI, PsbJ, PsbK, PsbL, PsbM, PsbT, PsbX, PsbY, PsbZ, Psb30/Ycf12, peripheral proteins PsbO, CyanoQ (PsbQ), PsbU, PsbV and a large number of cofactors. It forms dimeric complexes. The cofactor is The D1/D2 heterodimer binds P680, chlorophylls that are the primary electron donor of PSII, and subsequent electron acceptors. It shares a non-heme iron and each subunit binds pheophytin, quinone, additional chlorophylls, carotenoids and lipids. D1 provides most of the ligands for the Mn4-Ca-O5 cluster of the oxygen-evolving complex (OEC). There is also a Cl(-1) ion associated with D1 and D2, which is required for oxygen evolution. The PSII complex binds additional chlorophylls, carotenoids and specific lipids.. Tyr-161 forms a radical intermediate that is referred to as redox-active TyrZ, YZ or Y-Z. Post-translationally, C-terminally processed by CtpA; processing is essential to allow assembly of the oxygen-evolving complex and thus photosynthetic growth.

The protein resides in the cellular thylakoid membrane. The enzyme catalyses 2 a plastoquinone + 4 hnu + 2 H2O = 2 a plastoquinol + O2. Functionally, photosystem II (PSII) is a light-driven water:plastoquinone oxidoreductase that uses light energy to abstract electrons from H(2)O, generating O(2) and a proton gradient subsequently used for ATP formation. It consists of a core antenna complex that captures photons, and an electron transfer chain that converts photonic excitation into a charge separation. The D1/D2 (PsbA/PsbD) reaction center heterodimer binds P680, the primary electron donor of PSII as well as several subsequent electron acceptors. The sequence is that of Photosystem II protein D1 2 from Synechococcus sp. (strain CC9311).